We begin with the raw amino-acid sequence, 349 residues long: Beta-hexosaminidase (349 aa).

Substrate is bound by residues Asp-64, Arg-72, Arg-138, and Lys-168–His-169. Catalysis depends on His-181, which acts as the Proton donor/acceptor. Residue Asp-252 is the Nucleophile of the active site.

It belongs to the glycosyl hydrolase 3 family. NagZ subfamily.

The protein localises to the cytoplasm. It carries out the reaction Hydrolysis of terminal non-reducing N-acetyl-D-hexosamine residues in N-acetyl-beta-D-hexosaminides.. Its pathway is cell wall biogenesis; peptidoglycan recycling. Plays a role in peptidoglycan recycling by cleaving the terminal beta-1,4-linked N-acetylglucosamine (GlcNAc) from peptide-linked peptidoglycan fragments, giving rise to free GlcNAc, anhydro-N-acetylmuramic acid and anhydro-N-acetylmuramic acid-linked peptides. The sequence is that of Beta-hexosaminidase from Nitrosospira multiformis (strain ATCC 25196 / NCIMB 11849 / C 71).